The following is a 93-amino-acid chain: Small ribosomal subunit protein uS19 (93 aa).

The protein belongs to the universal ribosomal protein uS19 family.

Its function is as follows. Protein S19 forms a complex with S13 that binds strongly to the 16S ribosomal RNA. The chain is Small ribosomal subunit protein uS19 from Campylobacter hominis (strain ATCC BAA-381 / DSM 21671 / CCUG 45161 / LMG 19568 / NCTC 13146 / CH001A).